Reading from the N-terminus, the 364-residue chain is tRNA 2-selenouridine synthase (364 aa).

The Rhodanese domain occupies 12-135 (FLNDRPMMDT…MRTFLLDTTE (124 aa)). The active-site S-selanylcysteine intermediate is the C95.

The protein belongs to the SelU family. In terms of assembly, monomer.

The catalysed reaction is 5-methylaminomethyl-2-thiouridine(34) in tRNA + selenophosphate + (2E)-geranyl diphosphate + H2O + H(+) = 5-methylaminomethyl-2-selenouridine(34) in tRNA + (2E)-thiogeraniol + phosphate + diphosphate. It catalyses the reaction 5-methylaminomethyl-2-thiouridine(34) in tRNA + (2E)-geranyl diphosphate = 5-methylaminomethyl-S-(2E)-geranyl-thiouridine(34) in tRNA + diphosphate. It carries out the reaction 5-methylaminomethyl-S-(2E)-geranyl-thiouridine(34) in tRNA + selenophosphate + H(+) = 5-methylaminomethyl-2-(Se-phospho)selenouridine(34) in tRNA + (2E)-thiogeraniol. The enzyme catalyses 5-methylaminomethyl-2-(Se-phospho)selenouridine(34) in tRNA + H2O = 5-methylaminomethyl-2-selenouridine(34) in tRNA + phosphate. Functionally, involved in the post-transcriptional modification of the uridine at the wobble position (U34) of tRNA(Lys), tRNA(Glu) and tRNA(Gln). Catalyzes the conversion of 2-thiouridine (S2U-RNA) to 2-selenouridine (Se2U-RNA). Acts in a two-step process involving geranylation of 2-thiouridine (S2U) to S-geranyl-2-thiouridine (geS2U) and subsequent selenation of the latter derivative to 2-selenouridine (Se2U) in the tRNA chain. The polypeptide is tRNA 2-selenouridine synthase (Pseudomonas fluorescens (strain ATCC BAA-477 / NRRL B-23932 / Pf-5)).